A 512-amino-acid chain; its full sequence is DNA-binding protein (512 aa).

The interval 1–105 is disordered; sequence MAGRGGSQLE…QDSEDEREAE (105 aa). The span at 9-21 shows a compositional bias: basic and acidic residues; it reads LERRRERTPDRGR. A compositionally biased stretch (pro residues) spans 69–78; it reads QEQPPPPQQP. A compositionally biased stretch (basic residues) spans 79 to 88; that stretch reads PKKKPRKTKH. Over residues 96–105 the composition is skewed to acidic residues; sequence QDSEDEREAE. Y174 is subject to Phosphotyrosine; by host. Positions 263 and 265 each coordinate Zn(2+). A flexible loop region spans residues 276 to 310; that stretch reads IEMDVASENGQRALKENPDRAKVTQNRWGRSVVQL. Residues C318, C334, C376, C378, C430, and C447 each coordinate Zn(2+). The segment at 495 to 512 is C-terminal arm, DBP binding; sequence VSLPAGHAETSRQNPFDF.

It belongs to the adenoviridae E2A DNA-binding protein family. As to quaternary structure, homomultimerizes on viral ssDNA bound to pTP. Forms a initiation complex with viral polymerase, pTP and hosts NFIA and POU2F1/OCT1. Interacts with host SRCAP.

The protein resides in the host nucleus. Its function is as follows. Plays a role in the elongation phase of viral strand displacement replication by unwinding the template in an ATP-independent fashion, employing its capacity to form multimers. Also enhances the rate of initiation. Released from template upon second strand synthesis. Assembles in complex with viral pTP, viral pol, host NFIA and host POU2F1/OCT1 on viral origin of replication. Covers the whole ssDNA genome during synthesis. The complementary strand synthesis induces its relese from DNA template. May inhibit cellular transcription mediated by the interaction between host SRCAP and CBP. This Homo sapiens (Human) protein is DNA-binding protein.